Reading from the N-terminus, the 212-residue chain is MEAETSTQEVVKQVKNLPILMEDAPVGSDDHQLQYSYTFSYFMRPTGKFDPEDYASYVQPVGIMKSVEQFWSIMVHFKRPTEMCDKADIHFFKTGVKPVWEDPANCKGGKWIIRLKKGLSTRIWENLLMAIIGEQFLVGDELCGAVCSIRNQEDIISLWNRNADDTPVTNRIRETLRSVLQLPQNTVLEYKRHDDCLRDQSSYRHTTKNICK.

The cysteines at positions 143 and 147 are disulfide-linked.

Belongs to the eukaryotic initiation factor 4E family. In terms of assembly, eIF4F is a multi-subunit complex, the composition of which varies with external and internal environmental conditions. It is composed of at least eIF4A, eIF4E and eIF4G. eIF4E is also known to interact with other partners. Enriched in somatic cells.

Recognizes and binds the 7-methylguanosine-containing mRNA cap during an early step in the initiation of protein synthesis and facilitates ribosome binding by inducing the unwinding of the mRNAs secondary structures. All 5 eIF4E proteins bind monomethyl cap structures. Only ife-1, ife-2 and ife-5 bind trimethyl cap structures which result from trans-splicing. Translation of trimethyl cap structure mRNAs may be regulated by intracellular redox state; disulfide bonds change the width and depth of the cap-binding cavity determining selectivity to mRNA caps. The sequence is that of Eukaryotic translation initiation factor 4E-4 (ife-4) from Caenorhabditis elegans.